A 560-amino-acid polypeptide reads, in one-letter code: Calnexin homolog (560 aa).

An N-terminal signal peptide occupies residues M1–A22. The Lumenal portion of the chain corresponds to D23 to G489. Residues C132 and C163 are joined by a disulfide bond. Residues Y136, K138, Y154, and D161 each contribute to the an alpha-D-glucoside site. Residues I242–D375 are p domain (Extended arm). Tandem repeats lie at residues D244–D255, D261–E272, D280–E291, D299–D310, and G314–P324. 4 X approximate repeats stretches follow at residues D244–D310 and G314–P371. The disordered stretch occupies residues W253–D273. Residues C326 and C332 are joined by a disulfide bond. 3 tandem repeats follow at residues G333–P343, G347–P357, and G361–P371. Position 391 (E391) interacts with an alpha-D-glucoside. N-linked (GlcNAc...) asparagine glycosylation occurs at N418. A helical transmembrane segment spans residues I490–A512. Residues S513–D560 lie on the Cytoplasmic side of the membrane. The segment at A517–D560 is disordered. Over residues E525–D544 the composition is skewed to basic and acidic residues. Residue T551 is modified to Phosphothreonine. Residue S553 is modified to Phosphoserine. Residue T555 is modified to Phosphothreonine.

This sequence belongs to the calreticulin family.

The protein resides in the endoplasmic reticulum membrane. Calcium-binding protein that interacts with newly synthesized monoglucosylated glycoproteins in the endoplasmic reticulum. It may act in assisting protein assembly and/or in the retention within the ER of unassembled protein subunits. It seems to play a major role in the quality control apparatus of the ER by the retention of incorrectly folded proteins. This chain is Calnexin homolog (cal1), found in Schizosaccharomyces pombe (strain 972 / ATCC 24843) (Fission yeast).